Reading from the N-terminus, the 356-residue chain is UDP-N-acetylglucosamine--N-acetylmuramyl-(pentapeptide) pyrophosphoryl-undecaprenol N-acetylglucosamine transferase (356 aa).

Residues 15–17 (TGG), asparagine 127, arginine 163, serine 191, isoleucine 244, 263–268 (ALTVSE), and glutamine 288 each bind UDP-N-acetyl-alpha-D-glucosamine.

Belongs to the glycosyltransferase 28 family. MurG subfamily.

Its subcellular location is the cell inner membrane. It carries out the reaction di-trans,octa-cis-undecaprenyl diphospho-N-acetyl-alpha-D-muramoyl-L-alanyl-D-glutamyl-meso-2,6-diaminopimeloyl-D-alanyl-D-alanine + UDP-N-acetyl-alpha-D-glucosamine = di-trans,octa-cis-undecaprenyl diphospho-[N-acetyl-alpha-D-glucosaminyl-(1-&gt;4)]-N-acetyl-alpha-D-muramoyl-L-alanyl-D-glutamyl-meso-2,6-diaminopimeloyl-D-alanyl-D-alanine + UDP + H(+). Its pathway is cell wall biogenesis; peptidoglycan biosynthesis. Cell wall formation. Catalyzes the transfer of a GlcNAc subunit on undecaprenyl-pyrophosphoryl-MurNAc-pentapeptide (lipid intermediate I) to form undecaprenyl-pyrophosphoryl-MurNAc-(pentapeptide)GlcNAc (lipid intermediate II). This is UDP-N-acetylglucosamine--N-acetylmuramyl-(pentapeptide) pyrophosphoryl-undecaprenol N-acetylglucosamine transferase from Yersinia pestis bv. Antiqua (strain Antiqua).